The chain runs to 156 residues: 3-dehydroquinate dehydratase (156 aa).

Tyr22 acts as the Proton acceptor in catalysis. The substrate site is built by Asn73, His79, and Asp86. His99 acts as the Proton donor in catalysis. Substrate is bound by residues 100-101 (LS) and Arg110.

This sequence belongs to the type-II 3-dehydroquinase family. Homododecamer.

It catalyses the reaction 3-dehydroquinate = 3-dehydroshikimate + H2O. The protein operates within metabolic intermediate biosynthesis; chorismate biosynthesis; chorismate from D-erythrose 4-phosphate and phosphoenolpyruvate: step 3/7. In terms of biological role, catalyzes a trans-dehydration via an enolate intermediate. The protein is 3-dehydroquinate dehydratase of Nitratiruptor sp. (strain SB155-2).